Here is a 520-residue protein sequence, read N- to C-terminus: Peptide chain release factor 3 (520 aa).

The tr-type G domain occupies 8–277 (ESRKTFAIIS…FAPMPNARQT (270 aa)). GTP is bound by residues 17-24 (SHPDAGKT), 85-89 (DTPGH), and 139-142 (NKLD).

The protein belongs to the TRAFAC class translation factor GTPase superfamily. Classic translation factor GTPase family. PrfC subfamily.

It is found in the cytoplasm. Increases the formation of ribosomal termination complexes and stimulates activities of RF-1 and RF-2. It binds guanine nucleotides and has strong preference for UGA stop codons. It may interact directly with the ribosome. The stimulation of RF-1 and RF-2 is significantly reduced by GTP and GDP, but not by GMP. This is Peptide chain release factor 3 from Staphylococcus aureus (strain MRSA252).